A 2062-amino-acid chain; its full sequence is MKKKKGERGGSKEMKKRRSWIIKLEEIQSYQFLCNPWTKSNLMRFLIQILSHRERLIKLFDPRILSTLLLRDLRRSNPYFLVKGIVVLTLSILIYHFNHKSSMIEKKNFYSMKLFPIHNFMELGNETPEEYLKPFTKNWLIFPHLFLSFQLKRSYNRFIEHFDPISFNSGYGRNTNKKDEMISENQGPPSKTHLENNEKDLNLKIDSTLNSTENEYWEPEKDLCEDSFIEREQTKIEIESDLSSKCLSEYYPISWAKELFTEDQRYTEENSFPLERKRFIENFTKSIRYSFFYIWPMDEPCMGGPSATKKPIEDFNLSKRLLKRQQNVFSQYLRDSKSYSLMNRIVDLWKIKTYFEIENSSSNYAIPSDPGWNILNILHNNFRSKTKKIVLEMTDQFTLSITKPSQVHDQIYCNIYYYMNPLYELNKNGSLRSDRIFNHREKLKNQSLWVLLNIIDKADDYLDQIIDKQLSQIDSKNRLEIGTPFNNYRTEALSWYESIRYKIARYSENLFNRFYFINRFSHNLKNQIRTNWIENENLNNVTKDTIDRHSSSWKKIQREWLNRSIIRTDKNINRNLNVYKWSHQTEYFMKYLKHKKNYFQRVFDLIESCTNTNRNKIGWKDYFQFFQHTVKILNSNFDIISNLNSKFDIVISILDSHLNKLKSIDPQLLKKNNLDINDLLDLMGTLIVHLKKLKPFLFLLDDHNLSQRSKLLIDEGTIAPFVPNDIPINPSIIDFFYNEKNRMESFDNTDFSTISNDRENWLNPVKLSDQSSLRASFHGANTLQFFDYLHHPRPNYRKRLPSDMKRIYIKRKNLTYGQLFNLLLIHNNISSLLIGEIGPVHSEKETISLIKSQVSNIFLPKYLQRKRSGEQPFVLIYDLYRSFNLLTQLNPFVRDKRYISSIEEISTTPLTKEQIVNLEKTFCQPFFNRSDSEENNLDKCLKRGFSSNVGLIQTRSYQDDLLSEIFSNKNQEMFHRIQDWFVTKSFKNIIGNEGIDGRSTLSNSSKEEQKIKPSPHFNEPAKKQEMYRISQIDSILSKWDLFKTYMPWFFTSAWCKYLENMLLYTLPEILLHGSNPFVSILQDIKHNIMLKWNILWELSHPLWEPIKWKLRTNLTNLLNFRFRTTLMNKFFSSCEDCFIEETSDREWTHLRLLNARRYEYGILIPFFVLTYSILRYFKVIYSAFINLKIDFELIQYLEDPSYVIELQKLINPPVYNYLLYYIDIESLPSTKRKRKNRKLNLLITIIRELNGLCSSMDISEKEMEILVQFLMTEKNLSQFESNMTVSHIFLKKEFGDQITGQPGLIHLRYLAHTYQKGLMNYELNPFCLAENRIFLAFYQKITSSQILCQPNPKMPFSFHSGSLFSKGILLIGPMGTGRSYLIKSLAADSYVPLIRISLKKLLYGKFLYYPDPGRIPTEFNTFWRDTIDHFHITFELAKRMSPCIIWIPNIHELNVNDTITHLFGLGFTDSFLGLLLNYISRGGEKDSIRNILFIASTHIPQRVDPALIAPNRLDSSINIRMLVIPQRQREFPILLCSKGLYSEKEVSCPDEFGSITIDSDARDLAALANEALITSITRKKSVIDTNTIRYAIYSQICHLQSMDNQVGSSQNDERLIYKVGKAFIQNTLRRNSPMNPLSTKKELWKKRFCYLSEWYLEPSIAETTMKELTILPHILGCLAGSAARDSWSISERNRENWIPLDKFAEHDLDLASSLLESILVEFPFSRLGICRGKSDKDQSKFDKDQITFVPQPKMRNNHMIRFLKEYELKFTIATKKMYRDMDMDEELIKSVVWTPRTWRLSFLRSNRFDHTKTPNSLGSSYRFGSKKKAQIERSKFARQYPRQYKSSEKPTFCRGKRFLWDPFLFQEQRPVFSRREFFADEELLKRLYITYGSRRLLAKPNFFPKQSFQSAFHRYDSKYGINPGLIMNSWKPLSLRHRHIEHFKHIQEIGIHLERIQPYSSPYLYKCWLIENSRERVDRFQSLIHRQKRWLGTNSLLSNESFLYNTLFESYQYLSNLFLSNRVLLDQITKTLLEKECLFPNEIEHSIYTTGLRFDISWENLE.

Disordered regions lie at residues 176–197 (NKKD…LENN) and 997–1018 (GRST…PHFN). Position 1372-1379 (1372-1379 (GPMGTGRS)) interacts with ATP.

Belongs to the Ycf2 family.

It is found in the plastid. The protein localises to the chloroplast stroma. Its function is as follows. Probable ATPase of unknown function. Its presence in a non-photosynthetic plant (Epifagus virginiana) and experiments in tobacco indicate that it has an essential function which is probably not related to photosynthesis. The chain is Protein Ycf2 (ycf2) from Pinus koraiensis (Korean pine).